Consider the following 797-residue polypeptide: Striatin-3 (797 aa).

An N-acetylmethionine modification is found at methionine 1. Gly residues-rich tracts occupy residues 1–13 and 23–43; these read MDELAGGGGGGPG and GPGGNLGLSPGGNGAAGGGGP. Residues 1–60 are disordered; sequence MDELAGGGGGGPGMAAPPRQQQGPGGNLGLSPGGNGAAGGGGPPASEGAGPAAGPELSRP. Residues 44 to 56 show a composition bias toward low complexity; the sequence is PASEGAGPAAGPE. The interval 71–79 is caveolin-binding; it reads YIQHEWARF. Residues 77–136 adopt a coiled-coil conformation; sequence ARFEMERAHWEVERAELQARIAFLQGERKGQENLKKDLVRRIKMLEYALKQERAKYHKLK. Phosphothreonine is present on threonine 150. The tract at residues 166–183 is calmodulin-binding; sequence QNSQLTWKQGRQLLRQYL. Serine 202, serine 214, and serine 229 each carry phosphoserine. Disordered stretches follow at residues 224-278 and 313-338; these read LNGG…KHRM and DGEGAGEARSSGDGTEWDKDDLSPTA. Over residues 230 to 241 the composition is skewed to basic and acidic residues; that stretch reads PKQKGQEIKRSS. The span at 253–265 shows a compositional bias: acidic residues; the sequence is NADDSDEDEENDM. Phosphoserine occurs at positions 257 and 335. WD repeat units follow at residues 478 to 517, 531 to 570, 584 to 623, 679 to 718, 721 to 760, and 767 to 797; these read SHFDGVRALAFHPVEPVLVTASEDHTLKLWNLQKTVPAKK, AHIGPVLSLAISSNGEQCFSGGIDATIQWWNMPSPSVDPY, GHTDAVWGLAYSGIKNQLLSCSADGTVRLWNPQEKLPCIC, QSNNHINRVVSHPTLPVTITAHEDRHIKFFDNKTGKMIHS, AHLDAVTSLAVDPNGIYLMSGSHDCSIRLWNLDSKTCVQE, and KLDESIYDVAFHSSKAYIASAGADALAKVFV.

It belongs to the WD repeat striatin family. In terms of assembly, tetramerizes. Part of the core of STRIPAK complexes composed of PP2A catalytic and scaffolding subunits, the striatins (PP2A regulatory subunits), the striatin-associated proteins MOB4, STRIP1 and STRIP2, PDCD10 and members of the STE20 kinases, such as STK24 and STK26. The STRIPAK complex can be extended by adapter proteins such as SLMAP:SIKE1 or CTTNBP2NL. Interacts with CDC42BPB.

It localises to the cytoplasm. It is found in the membrane. Functionally, calmodulin-binding scaffolding protein which is the center of the striatin-interacting phosphatase and kinase (STRIPAK) complexes. STRIPAK complexes have critical roles in protein (de)phosphorylation and are regulators of multiple signaling pathways including Hippo, MAPK, nuclear receptor and cytoskeleton remodeling. Different types of STRIPAK complexes are involved in a variety of biological processes such as cell growth, differentiation, apoptosis, metabolism and immune regulation. This is Striatin-3 from Homo sapiens (Human).